We begin with the raw amino-acid sequence, 345 residues long: Sesquiterpene synthase PILCRDRAFT_825684 (345 aa).

Mg(2+)-binding residues include Asp91, Asn226, Ser230, and Glu234. Residues 91-95 carry the DDXXD motif motif; it reads DELTD. Residues Arg316 and Tyr317 each coordinate (2E,6E)-farnesyl diphosphate.

The protein belongs to the terpene synthase family. It depends on Mg(2+) as a cofactor.

It carries out the reaction (2E,6E)-farnesyl diphosphate = viridiflorene + diphosphate. Terpene cyclase that catalyzes the cyclization of farnesyl diphosphate (FPP) to various sesquiterpenes, including beta-elemene, viridiflorene and gamma-cadinene. Gamma-cadinene is the major product of PILCRDRAFT_825684. The protein is Sesquiterpene synthase PILCRDRAFT_825684 of Piloderma croceum (strain F 1598).